The following is a 70-amino-acid chain: Probable U6 snRNA-associated Sm-like protein (70 aa).

Residues 3–70 (DPFCFLKMYL…ILFVGPRLLL (68 aa)) enclose the Sm domain.

It belongs to the snRNP Sm proteins family.

It localises to the nucleus. Its function is as follows. Binds specifically to the 3'-terminal U-tract of U6 snRNA. This chain is Probable U6 snRNA-associated Sm-like protein, found in Encephalitozoon cuniculi (strain GB-M1) (Microsporidian parasite).